The sequence spans 292 residues: Ribosomal protein L11 methyltransferase (292 aa).

The S-adenosyl-L-methionine site is built by threonine 144, glycine 165, aspartate 187, and asparagine 229.

It belongs to the methyltransferase superfamily. PrmA family.

The protein resides in the cytoplasm. It carries out the reaction L-lysyl-[protein] + 3 S-adenosyl-L-methionine = N(6),N(6),N(6)-trimethyl-L-lysyl-[protein] + 3 S-adenosyl-L-homocysteine + 3 H(+). Methylates ribosomal protein L11. This chain is Ribosomal protein L11 methyltransferase, found in Azotobacter vinelandii (strain DJ / ATCC BAA-1303).